Consider the following 477-residue polypeptide: Endoglucanase A (477 aa).

Residues 1-32 (MKNVKKRVGVVLLILAVLGVYMLAMPANTVSA) form the signal peptide. Catalysis depends on E95, which acts as the Proton donor. The active-site Nucleophile is D152. Residues 411 to 477 (PQVVYGDVNG…LIKSIPHLPY (67 aa)) enclose the Dockerin domain.

It belongs to the glycosyl hydrolase 8 (cellulase D) family.

It catalyses the reaction Endohydrolysis of (1-&gt;4)-beta-D-glucosidic linkages in cellulose, lichenin and cereal beta-D-glucans.. Its function is as follows. This enzyme catalyzes the endohydrolysis of 1,4-beta-glucosidic linkages in cellulose, lichenin and cereal beta-D-glucans. The polypeptide is Endoglucanase A (celA) (Acetivibrio thermocellus (strain ATCC 27405 / DSM 1237 / JCM 9322 / NBRC 103400 / NCIMB 10682 / NRRL B-4536 / VPI 7372) (Clostridium thermocellum)).